The chain runs to 132 residues: Large ribosomal subunit protein uL14 (132 aa).

Belongs to the universal ribosomal protein uL14 family. Part of the 50S ribosomal subunit. Forms a cluster with proteins L3 and L24e, part of which may contact the 16S rRNA in 2 intersubunit bridges.

Functionally, binds to 23S rRNA. Forms part of two intersubunit bridges in the 70S ribosome. This chain is Large ribosomal subunit protein uL14, found in Methanococcus maripaludis (strain C5 / ATCC BAA-1333).